Consider the following 644-residue polypeptide: Threonine--tRNA ligase (644 aa).

Residues 1–62 form the TGS domain; that stretch reads MSFSVTLPDG…DSDVEIAIIT (62 aa). The interval 240–538 is catalytic; sequence DHRTIGRDLD…LTEIYKGAFP (299 aa). The Zn(2+) site is built by Cys-334, His-385, and His-515.

Belongs to the class-II aminoacyl-tRNA synthetase family. As to quaternary structure, homodimer. It depends on Zn(2+) as a cofactor.

It localises to the cytoplasm. The catalysed reaction is tRNA(Thr) + L-threonine + ATP = L-threonyl-tRNA(Thr) + AMP + diphosphate + H(+). In terms of biological role, catalyzes the attachment of threonine to tRNA(Thr) in a two-step reaction: L-threonine is first activated by ATP to form Thr-AMP and then transferred to the acceptor end of tRNA(Thr). Also edits incorrectly charged L-seryl-tRNA(Thr). This chain is Threonine--tRNA ligase, found in Lactobacillus acidophilus (strain ATCC 700396 / NCK56 / N2 / NCFM).